Consider the following 447-residue polypeptide: Phosphoglucosamine mutase (447 aa).

S101 acts as the Phosphoserine intermediate in catalysis. Residues S101, D242, D244, and D246 each contribute to the Mg(2+) site. S101 carries the phosphoserine modification.

This sequence belongs to the phosphohexose mutase family. The cofactor is Mg(2+). In terms of processing, activated by phosphorylation.

It catalyses the reaction alpha-D-glucosamine 1-phosphate = D-glucosamine 6-phosphate. Its function is as follows. Catalyzes the conversion of glucosamine-6-phosphate to glucosamine-1-phosphate. The chain is Phosphoglucosamine mutase from Xanthobacter autotrophicus (strain ATCC BAA-1158 / Py2).